Reading from the N-terminus, the 281-residue chain is MGIKTFNPYTPSRRHMTGSDFAEITTSTPEKSLVVSLKKNAGRNNQGKITVRHQGGGSRRKYRIIDFKRKKDGISAVVKTIEYDPNRTANIALICYADGEKAYILAPNGLQVGQTVMNGATAEIKVGNCLPLANIPVGSQIHNIELYPGKGGQLVRSAGNSAQLMAREGKYATLRLPSGEMRMVPISCRATLGQVGNIDHELVTLGKAGRVRHMGIRPTVRGSVMNPNDHPHGGGEGKTGIGRPGPVTPWGKPALGLKTRKKNKQSNKMIMRRRDGKALSK.

The disordered stretch occupies residues 220 to 281; sequence VRGSVMNPND…RRRDGKALSK (62 aa). Basic residues predominate over residues 258–271; that stretch reads KTRKKNKQSNKMIM. The segment covering 272–281 has biased composition (basic and acidic residues); that stretch reads RRRDGKALSK.

This sequence belongs to the universal ribosomal protein uL2 family. In terms of assembly, part of the 50S ribosomal subunit. Forms a bridge to the 30S subunit in the 70S ribosome.

In terms of biological role, one of the primary rRNA binding proteins. Required for association of the 30S and 50S subunits to form the 70S ribosome, for tRNA binding and peptide bond formation. It has been suggested to have peptidyltransferase activity; this is somewhat controversial. Makes several contacts with the 16S rRNA in the 70S ribosome. The sequence is that of Large ribosomal subunit protein uL2 from Lachnoclostridium phytofermentans (strain ATCC 700394 / DSM 18823 / ISDg) (Clostridium phytofermentans).